The chain runs to 282 residues: 2-dehydro-3-deoxyphosphooctonate aldolase (282 aa).

Belongs to the KdsA family.

The protein localises to the cytoplasm. It catalyses the reaction D-arabinose 5-phosphate + phosphoenolpyruvate + H2O = 3-deoxy-alpha-D-manno-2-octulosonate-8-phosphate + phosphate. It participates in carbohydrate biosynthesis; 3-deoxy-D-manno-octulosonate biosynthesis; 3-deoxy-D-manno-octulosonate from D-ribulose 5-phosphate: step 2/3. Its pathway is bacterial outer membrane biogenesis; lipopolysaccharide biosynthesis. The sequence is that of 2-dehydro-3-deoxyphosphooctonate aldolase from Bradyrhizobium diazoefficiens (strain JCM 10833 / BCRC 13528 / IAM 13628 / NBRC 14792 / USDA 110).